A 662-amino-acid chain; its full sequence is UvrABC system protein B (662 aa).

In terms of domain architecture, Helicase ATP-binding spans 31–188; it reads DNIEGGEKAQ…NDLVDIQFER (158 aa). ATP is bound at residue 44–51; that stretch reads GATGTGKT. A Beta-hairpin motif is present at residues 97-120; sequence YYDYYQPEAYVPSSDTYIEKDSSV. Positions 435 to 601 constitute a Helicase C-terminal domain; that stretch reads QIDDLLGEIN…TIKKEIRDLI (167 aa). A UVR domain is found at 626-661; the sequence is KELVKKLEKQMQEAVEVLDFELAAQIRDMMLEVKAL.

Belongs to the UvrB family. Forms a heterotetramer with UvrA during the search for lesions. Interacts with UvrC in an incision complex.

Its subcellular location is the cytoplasm. Functionally, the UvrABC repair system catalyzes the recognition and processing of DNA lesions. A damage recognition complex composed of 2 UvrA and 2 UvrB subunits scans DNA for abnormalities. Upon binding of the UvrA(2)B(2) complex to a putative damaged site, the DNA wraps around one UvrB monomer. DNA wrap is dependent on ATP binding by UvrB and probably causes local melting of the DNA helix, facilitating insertion of UvrB beta-hairpin between the DNA strands. Then UvrB probes one DNA strand for the presence of a lesion. If a lesion is found the UvrA subunits dissociate and the UvrB-DNA preincision complex is formed. This complex is subsequently bound by UvrC and the second UvrB is released. If no lesion is found, the DNA wraps around the other UvrB subunit that will check the other stand for damage. The sequence is that of UvrABC system protein B from Streptococcus pneumoniae (strain ATCC 700669 / Spain 23F-1).